The chain runs to 100 residues: Urease subunit gamma (100 aa).

The protein belongs to the urease gamma subunit family. In terms of assembly, heterotrimer of UreA (gamma), UreB (beta) and UreC (alpha) subunits. Three heterotrimers associate to form the active enzyme.

Its subcellular location is the cytoplasm. The catalysed reaction is urea + 2 H2O + H(+) = hydrogencarbonate + 2 NH4(+). It participates in nitrogen metabolism; urea degradation; CO(2) and NH(3) from urea (urease route): step 1/1. This chain is Urease subunit gamma, found in Methylibium petroleiphilum (strain ATCC BAA-1232 / LMG 22953 / PM1).